Here is a 193-residue protein sequence, read N- to C-terminus: Dirigent protein (193 aa).

Residues 1-29 (MGGEKAFSFIFLLFLCFFLANLSASSAHP) form the signal peptide. An intrachain disulfide couples cysteine 40 to cysteine 192. N-linked (GlcNAc...) asparagine glycosylation is found at asparagine 59 and asparagine 129.

The protein belongs to the plant dirigent protein family. Homodimer. In terms of tissue distribution, expressed in rhizomes, stems, and leaves.

The protein localises to the secreted. Its subcellular location is the extracellular space. It is found in the apoplast. It participates in aromatic compound metabolism; phenylpropanoid biosynthesis. Its function is as follows. Dirigent proteins impart stereoselectivity on the phenoxy radical-coupling reaction, yielding optically active lignans from two molecules of coniferyl alcohol in the biosynthesis of lignans, flavonolignans, and alkaloids and thus plays a central role in plant secondary metabolism. Also involved in the biosynthesis of etoposide, a chemotherapeutic compound of the topoisomerase inhibitor family. This is Dirigent protein from Sinopodophyllum hexandrum (Himalayan may apple).